We begin with the raw amino-acid sequence, 235 residues long: Large ribosomal subunit protein uL1 (235 aa).

It belongs to the universal ribosomal protein uL1 family. Part of the 50S ribosomal subunit.

In terms of biological role, binds directly to 23S rRNA. The L1 stalk is quite mobile in the ribosome, and is involved in E site tRNA release. Functionally, protein L1 is also a translational repressor protein, it controls the translation of the L11 operon by binding to its mRNA. The chain is Large ribosomal subunit protein uL1 from Pseudarthrobacter chlorophenolicus (strain ATCC 700700 / DSM 12829 / CIP 107037 / JCM 12360 / KCTC 9906 / NCIMB 13794 / A6) (Arthrobacter chlorophenolicus).